A 346-amino-acid polypeptide reads, in one-letter code: Nicotinate-nucleotide--dimethylbenzimidazole phosphoribosyltransferase (346 aa).

Glu-312 serves as the catalytic Proton acceptor.

It belongs to the CobT family.

The catalysed reaction is 5,6-dimethylbenzimidazole + nicotinate beta-D-ribonucleotide = alpha-ribazole 5'-phosphate + nicotinate + H(+). Its pathway is nucleoside biosynthesis; alpha-ribazole biosynthesis; alpha-ribazole from 5,6-dimethylbenzimidazole: step 1/2. In terms of biological role, catalyzes the synthesis of alpha-ribazole-5'-phosphate from nicotinate mononucleotide (NAMN) and 5,6-dimethylbenzimidazole (DMB). The polypeptide is Nicotinate-nucleotide--dimethylbenzimidazole phosphoribosyltransferase (Cupriavidus necator (strain ATCC 17699 / DSM 428 / KCTC 22496 / NCIMB 10442 / H16 / Stanier 337) (Ralstonia eutropha)).